A 399-amino-acid chain; its full sequence is Subtilisin-like protease 4 (399 aa).

Residues 1–19 (MVCLKTLSVFLAAFAAADA) form the signal peptide. The propeptide occupies 20–118 (RAVFKTQGHK…VEQDQVVRIS (99 aa)). Residues 38–117 (YIVVMKDGVS…YVEQDQVVRI (80 aa)) form the Inhibitor I9 domain. N-linked (GlcNAc...) asparagine glycosylation occurs at Asn102. In terms of domain architecture, Peptidase S8 spans 128 to 399 (SWGLGRVSHR…NRLLYNGSGQ (272 aa)). Residues Asp160 and His191 each act as charge relay system in the active site. N-linked (GlcNAc...) asparagine glycans are attached at residues Asn252 and Asn308. Ser346 serves as the catalytic Charge relay system. Asn395 carries N-linked (GlcNAc...) asparagine glycosylation.

This sequence belongs to the peptidase S8 family.

Its subcellular location is the secreted. Its function is as follows. Secreted subtilisin-like serine protease with keratinolytic activity that contributes to pathogenicity. This is Subtilisin-like protease 4 (SUB4) from Trichophyton rubrum (Athlete's foot fungus).